Reading from the N-terminus, the 144-residue chain is Sentan (144 aa).

Residues 1–31 (MCGCRASVPSTKHYSVNPAPTTRSPPAAAGM) are disordered. The segment covering 18–29 (PAPTTRSPPAAA) has biased composition (low complexity).

It belongs to the S-100 family.

It localises to the cell projection. Its subcellular location is the cilium. In terms of biological role, may be a component of the linker structure that bridges the ciliary membrane and peripheral singlet microtubules. This chain is Sentan, found in Gallus gallus (Chicken).